Consider the following 317-residue polypeptide: MTTQLDSLRNMTVVVADTGDIDAIKKYQPQDATTNPSLILSASALPQYAPLIDEAVAYAKAQSNDKAQQLIDAEDKLAVNIGLEILKIVPGRISTEVDARLSYDTQATVEKARKLIALYNAAGISNDRILIKIASTWQGIRAAEILEKEGINCNLTLLFSEAQARACAEAGVYLISPFVGRILDWYKANSDKKEYAPAEDPGVISVTKIYNYYKEYGYNTVVMGASFRNVGEITELAGCDRLTIAPALLKELQENSTALVRKLEYKGEVKAKPQPLTEAEFYWQHNSDAMAVEKLAEGIRKFAIDQEKLETMLSAEL.

The Schiff-base intermediate with substrate role is filled by Lys132.

Belongs to the transaldolase family. Type 1 subfamily. As to quaternary structure, homodimer.

Its subcellular location is the cytoplasm. The enzyme catalyses D-sedoheptulose 7-phosphate + D-glyceraldehyde 3-phosphate = D-erythrose 4-phosphate + beta-D-fructose 6-phosphate. It functions in the pathway carbohydrate degradation; pentose phosphate pathway; D-glyceraldehyde 3-phosphate and beta-D-fructose 6-phosphate from D-ribose 5-phosphate and D-xylulose 5-phosphate (non-oxidative stage): step 2/3. In terms of biological role, transaldolase is important for the balance of metabolites in the pentose-phosphate pathway. The protein is Transaldolase of Haemophilus influenzae (strain PittEE).